Here is a 101-residue protein sequence, read N- to C-terminus: NADH-quinone oxidoreductase subunit K (101 aa).

The next 3 helical transmembrane spans lie at 4-24 (LGHM…GIFL), 30-50 (IVLL…FVGF), and 62-82 (FVFF…AILV).

The protein belongs to the complex I subunit 4L family. As to quaternary structure, NDH-1 is composed of 14 different subunits. Subunits NuoA, H, J, K, L, M, N constitute the membrane sector of the complex.

It localises to the cell inner membrane. The catalysed reaction is a quinone + NADH + 5 H(+)(in) = a quinol + NAD(+) + 4 H(+)(out). NDH-1 shuttles electrons from NADH, via FMN and iron-sulfur (Fe-S) centers, to quinones in the respiratory chain. The immediate electron acceptor for the enzyme in this species is believed to be ubiquinone. Couples the redox reaction to proton translocation (for every two electrons transferred, four hydrogen ions are translocated across the cytoplasmic membrane), and thus conserves the redox energy in a proton gradient. The protein is NADH-quinone oxidoreductase subunit K of Stenotrophomonas maltophilia (strain K279a).